The sequence spans 79 residues: Acyl carrier protein (79 aa).

One can recognise a Carrier domain in the interval 2-77 (SEVADKVKKI…DAVEYIEKQK (76 aa)). S37 carries the post-translational modification O-(pantetheine 4'-phosphoryl)serine.

The protein belongs to the acyl carrier protein (ACP) family. 4'-phosphopantetheine is transferred from CoA to a specific serine of apo-ACP by AcpS. This modification is essential for activity because fatty acids are bound in thioester linkage to the sulfhydryl of the prosthetic group.

The protein localises to the cytoplasm. It participates in lipid metabolism; fatty acid biosynthesis. In terms of biological role, carrier of the growing fatty acid chain in fatty acid biosynthesis. The polypeptide is Acyl carrier protein (Granulibacter bethesdensis (strain ATCC BAA-1260 / CGDNIH1)).